A 75-amino-acid polypeptide reads, in one-letter code: Phytosulfokines (75 aa).

Positions 1 to 22 are cleaved as a signal peptide; sequence MSSKAITLLLIALLFSLSLAQA. Residues 23-66 constitute a propeptide that is removed on maturation; the sequence is ARPLQPADSTKSVHVIPEKVHDEACEGVGEEECLMRRTLTAHVD. Residues Tyr-67 and Tyr-69 each carry the sulfotyrosine modification. Residues 72–75 constitute a propeptide that is removed on maturation; sequence DHNP.

It belongs to the phytosulfokine family. Sulfation is important for activity and for the binding to a putative membrane receptor. Deletion of the sulfate groups of Tyr-67 and Tyr-69 resulted in compounds with respectively 0.6% and 4% of the activity. Post-translationally, PSK-alpha is produced by endopeptidase digestion. PSK-beta is produced from PSK-alpha by exopeptidase digestion.

It is found in the secreted. Functionally, promotes plant cell differentiation, organogenesis and somatic embryogenesis as well as cell proliferation. This Asparagus officinalis (Garden asparagus) protein is Phytosulfokines (PSK).